We begin with the raw amino-acid sequence, 22 residues long: Unknown endosperm protein L (22 aa).

Basic and acidic residues predominate over residues 1-11 (MRHSNKIRDEE). Positions 1 to 22 (MRHSNKIRDEEMVNNTRLNXXA) are disordered. Residues 13-22 (VNNTRLNXXA) show a composition bias toward polar residues.

The N-terminus is blocked.

This Hordeum vulgare (Barley) protein is Unknown endosperm protein L.